The primary structure comprises 358 residues: CX3C chemokine receptor 1 (358 aa).

Residues 1 to 26 (MHTTLPESTSENFEYYDLAEACDMGD) lie on the Extracellular side of the membrane. Residues 27 to 47 (IVALGTVFVVILYSLVFAFGL) traverse the membrane as a helical segment. Over 48–68 (VGNLLVVFALINSQRSKSITD) the chain is Cytoplasmic. A helical transmembrane segment spans residues 69–89 (IYLLNLALSDLLFVATLPFWT). Residues 90 to 105 (HYVINEQGLHHATCKL) are Extracellular-facing. The cysteines at positions 103 and 176 are disulfide-linked. The chain crosses the membrane as a helical span at residues 106-126 (ITAFFFIGFFGGIFFITVISV). The Cytoplasmic portion of the chain corresponds to 127–147 (DRFLAIVLAANSMSNRTVQHG). The chain crosses the membrane as a helical span at residues 148 to 168 (VTTSLGVWAAAILVATPQFMF). At 169–186 (TREKENECFGDYPEILQE) the chain is on the extracellular side. Residues 187-207 (IWPVILNTEINFLGFLLPLLI) form a helical membrane-spanning segment. Residues 208–232 (MSYCYFRIMQTLFSCKNHKKAKAIR) lie on the Cytoplasmic side of the membrane. The helical transmembrane segment at 233 to 253 (LIFLVVVVFFLFWTPYNVMIF) threads the bilayer. The Extracellular portion of the chain corresponds to 254-275 (LQTLNLYDFFPKCDVKRDLKLA). A helical membrane pass occupies residues 276-296 (ISVTETIAFSHCCLNPLIYAF). Topologically, residues 297-358 (AGEKFRRYLY…TSDGDASILL (62 aa)) are cytoplasmic. Residue threonine 349 is modified to Phosphothreonine.

This sequence belongs to the G-protein coupled receptor 1 family. In terms of assembly, found in a ternary complex with CX3CL1 and ITGAV:ITGB3 or ITGA4:ITGB1. This protein is not N-glycosylated which is unusual for G-protein-coupled receptors.

It is found in the cell membrane. Functionally, receptor for the C-X3-C chemokine fractalkine (CX3CL1) present on many early leukocyte cells; CX3CR1-CX3CL1 signaling exerts distinct functions in different tissue compartments, such as immune response, inflammation, cell adhesion and chemotaxis. CX3CR1-CX3CL1 signaling mediates cell migratory functions. Responsible for the recruitment of natural killer (NK) cells to inflamed tissues. Acts as a regulator of inflammation process leading to atherogenesis by mediating macrophage and monocyte recruitment to inflamed atherosclerotic plaques, promoting cell survival. Involved in airway inflammation by promoting interleukin 2-producing T helper (Th2) cell survival in inflamed lung. Involved in the migration of circulating monocytes to non-inflamed tissues, where they differentiate into macrophages and dendritic cells. Acts as a negative regulator of angiogenesis, probably by promoting macrophage chemotaxis. Plays a key role in brain microglia by regulating inflammatory response in the central nervous system (CNS) and regulating synapse maturation. Required to restrain the microglial inflammatory response in the CNS and the resulting parenchymal damage in response to pathological stimuli. Involved in brain development by participating in synaptic pruning, a natural process during which brain microglia eliminates extra synapses during postnatal development. Synaptic pruning by microglia is required to promote the maturation of circuit connectivity during brain development. Acts as an important regulator of the gut microbiota by controlling immunity to intestinal bacteria and fungi. Expressed in lamina propria dendritic cells in the small intestine, which form transepithelial dendrites capable of taking up bacteria in order to provide defense against pathogenic bacteria. Required to initiate innate and adaptive immune responses against dissemination of commensal fungi (mycobiota) component of the gut: expressed in mononuclear phagocytes (MNPs) and acts by promoting induction of antifungal IgG antibodies response to confer protection against disseminated C.albicans or C.auris infection. Also acts as a receptor for C-C motif chemokine CCL26, inducing cell chemotaxis. This Bos taurus (Bovine) protein is CX3C chemokine receptor 1.